The primary structure comprises 351 residues: uncharacterized protein (351 aa).

In terms of domain architecture, HTH lacI-type spans 14-69; that stretch reads PRLADIAAQAQVSEATASRVLNGRPASRXSTRQRVLAALDLLGYERPTRLRRRSAG. The H-T-H motif DNA-binding region spans 16–35; sequence LADIAAQAQVSEATASRVLN.

Putative sugar-binding regulatory protein for the alpha-amylase gene. This is an uncharacterized protein from Streptomyces limosus (Streptomyces albidoflavus).